The primary structure comprises 748 residues: MAADVSVTHRPPLSPEAEAEAETPETVDRRTPEQELPPLDPEEIRKRLEHTERQFRNRRKILIRGLPGDVTNQEVHDLLSDYELKYCFVDKYKGTAFVTLLNGEQAEAAINTFHQSRLRERELSVQLQPTDALLCVANLPPSLTQAQFEELVRPFGSLERCFLVYSERTGHSKGYGFAEYMKKDSAARAKSDLLGKPLGPRTLYVHWTDAGQLTPALLHSRCLCVDHLPPGFNDVDALRQALSAVYTPTFCQLASGQDGQLKGFAVLEYETAEMAEAAQQRADGLALGGSHLRVSFCAPGPPGRSMLAALIAAQATALNRGKGLLPEPNILQLLNNLGPSASLQLLLNPLLHGGASGKQGLLGAPPAMPLLSGPALSTALLQLALQSQNQSQSQSQKKPGILGDSPLGTLQAGAQPSNSLLGELSAGGGLAPELPPRRGKPQPLLPPLLGPSGGDREPMGLGPPASQLTPPPAPMGLRGSSLRGLPKDSGPLPTPPGVSLLGEPPKDYRIPLNPYLNLHSLLPSSNLAGKETRGWGGSGRGRRPAEPPLPSPAVPGGGNASNNGSKAFPMKPRLLSPIASNRLPPEPGLPDSYSFDYPTDVGPRRLFSHPRESNLGAHGPSRHKMSPPPSSFSEPRSGGGSGGPLSHFYSGSPTSYFTSGLQAGLKQSHLNKAVGSSPMGSSEGLLGLGPGPNGHSHLLKTPLGGQKRSFSHLLPSPEPSPEGSYVGQHSQGLGGHYADSYLKRKRIF.

The disordered stretch occupies residues 1 to 42; the sequence is MAADVSVTHRPPLSPEAEAEAETPETVDRRTPEQELPPLDPE. Ala2 carries the post-translational modification N-acetylalanine. A phosphoserine mark is found at Ser6 and Ser14. Thr31 is modified (phosphothreonine). A Nuclear localization signal motif is present at residues 45–60; it reads RKRLEHTERQFRNRRK. 3 consecutive RRM domains span residues 59–130, 132–210, and 221–299; these read RKIL…LQPT, ALLC…WTDA, and RCLC…FCAP. The segment at 307-401 is interaction with PTBP1; that stretch reads LAALIAAQAT…QSQSQKKPGI (95 aa). Disordered stretches follow at residues 390 to 505, 525 to 647, and 672 to 731; these read QSQS…GEPP, SNLA…PLSH, and KAVG…QHSQ. Residue Thr469 is modified to Phosphothreonine. Ser480, Ser576, Ser626, and Ser630 each carry phosphoserine. A compositionally biased stretch (low complexity) spans 675-685; that stretch reads GSSPMGSSEGL. Residues Ser716 and Ser720 each carry the phosphoserine modification. Residues 743-746 carry the Nuclear localization signal motif; sequence KRKR.

Interacts with PTBP1, RAVER2, VCL and ACTN1. Part of a complex containing RAVER1, VCL and ACTN1. Ubiquitous. Detected in aorta, brain, gut, heart, kidney, liver, spleen, uterus and skeletal muscle.

The protein localises to the nucleus. The protein resides in the cytoplasm. In terms of biological role, cooperates with PTBP1 to modulate regulated alternative splicing events. Promotes exon skipping. Cooperates with PTBP1 to modulate switching between mutually exclusive exons during maturation of the TPM1 pre-mRNA. This chain is Ribonucleoprotein PTB-binding 1 (Raver1), found in Rattus norvegicus (Rat).